We begin with the raw amino-acid sequence, 433 residues long: MSVFKGEVTTLPPDKSISHRAALIGALAEGVTEITNFSGGFDNQSTLGVLGACGIPLTQEEVPGPWGGTIRRVVIESKGLWSFRPSGAPLECNNSGSTMRMMAGILAGQPFGSELVGDGSLMKRPMQRVAGPLRDMGAGVELSESGTAPMRIAGTKELRPIVYRLPVPSAQVKSLVAFAALHAEGESRIIEPVLSRDHTELMLGLEASEVDGERVIVVPGRRRIEARPFLVPADPSAACFIVALALLAPGSEIMIRDVCLNPTRAAFLDIMIAAGGQITIENRRTVGGEDIGDILARGGGVLEPLSISDPGVVARVIDEIPMLAVLSVFASGSFEVSNAGELRTKECDRLNALAVNLQRLGCLCEESPDGMRVSGGVRAQHSPVVVECFDDHRIAMSFAIAARATGMDIELSDSAVVGVSFPNFFALLESLEV.

3-phosphoshikimate is bound by residues lysine 15, serine 16, and arginine 20. Residue lysine 15 coordinates phosphoenolpyruvate. Residues glycine 96 and arginine 124 each coordinate phosphoenolpyruvate. Positions 169, 171, 318, and 345 each coordinate 3-phosphoshikimate. Glutamine 171 is a binding site for phosphoenolpyruvate. The Proton acceptor role is filled by aspartate 318. 2 residues coordinate phosphoenolpyruvate: arginine 349 and arginine 393.

This sequence belongs to the EPSP synthase family. Monomer.

It localises to the cytoplasm. It carries out the reaction 3-phosphoshikimate + phosphoenolpyruvate = 5-O-(1-carboxyvinyl)-3-phosphoshikimate + phosphate. The protein operates within metabolic intermediate biosynthesis; chorismate biosynthesis; chorismate from D-erythrose 4-phosphate and phosphoenolpyruvate: step 6/7. In terms of biological role, catalyzes the transfer of the enolpyruvyl moiety of phosphoenolpyruvate (PEP) to the 5-hydroxyl of shikimate-3-phosphate (S3P) to produce enolpyruvyl shikimate-3-phosphate and inorganic phosphate. The sequence is that of 3-phosphoshikimate 1-carboxyvinyltransferase from Chlorobium phaeovibrioides (strain DSM 265 / 1930) (Prosthecochloris vibrioformis (strain DSM 265)).